A 921-amino-acid chain; its full sequence is MATNILTKIFGSRNDRQLKQYRKSVVRINAMEAELEKLSDEALRGKTQEFKDRIAKGESLDALLPEAFAVVREGSKRVMKMRHFDVQLLGGMSLHNGKISEMGTGEGKTLTATMPVYLNALTGKGVHVVTVNDYLANRDAQWMGKLYNFLGLSVGINLPNMAREEKQAAYRADITYGTNNEYGFDYLRDNMVYEGADRVQRGLNYAIVDEVDSILIDEARTPLIISGQAEDQTDLYIAINKVVPLLQRQEGEEDIRTGEGVTKPGDFTVDEKSHQVFLTEQGHESAERILSELGLIPEGATLYDPANITLMHHLYAALRANHLYHRDQHYVVQNGEIVIVDEFTGRLMSGRRWSEGLHQAVEAKEGVAIQPENQTMASITFQNYFRLYGKLAGMTGTADTEAYEFQEIYGLETLVMPPNRPSRRDDQLDRVYKTTREKYEAAIKDIRECYERGQPVLVGTTSIENSEIIAALLDKEKLPHQVLNAKQHAREAEIIAQAGRSKVITIATNMAGRGTDIVLGGNVSKELEAVEADETLTAEQKQQQIDAIQAQWVQEHEKVKALGGLRIIATERHESRRIDNQLRGRSGRQGDPGSSRFYLSLDDSLMRIFAGDRVKAIMDRLKMPDGEAIEAGIVTRSIESAQRKVESRNFDMRKQLLEYDDVANDQRKVIYQQRNEILDAGDLSAQIASLRAGCFDDLVRQYVPVESVEEQWDIATLEKVLADDWQLNLALQQQVSAASAITDHDLLTSVQQEADRVFAAKVEQVGGENFTQFERMVLLQSIDTHWREHLSSLDYLRQGIHLRGYAQKQPKQEYKREAFELFSQLLDAVKNDVTKVLMTVKVQSSEQLEQAAEDMESRGESIANVTYMAPTETGEVETITDDETFRKKSTIPGGNVPRVGRNELCPCGSGKKYKHCHGKLA.

Residues Q87, 105 to 109 (GEGKT), and D516 each bind ATP. Zn(2+) is bound by residues C905, C907, C916, and H917.

Belongs to the SecA family. In terms of assembly, monomer and homodimer. Part of the essential Sec protein translocation apparatus which comprises SecA, SecYEG and auxiliary proteins SecDF-YajC and YidC. The cofactor is Zn(2+).

It is found in the cell inner membrane. Its subcellular location is the cytoplasm. It carries out the reaction ATP + H2O + cellular proteinSide 1 = ADP + phosphate + cellular proteinSide 2.. In terms of biological role, part of the Sec protein translocase complex. Interacts with the SecYEG preprotein conducting channel. Has a central role in coupling the hydrolysis of ATP to the transfer of proteins into and across the cell membrane, serving both as a receptor for the preprotein-SecB complex and as an ATP-driven molecular motor driving the stepwise translocation of polypeptide chains across the membrane. The chain is Protein translocase subunit SecA from Albidiferax ferrireducens (strain ATCC BAA-621 / DSM 15236 / T118) (Rhodoferax ferrireducens).